The primary structure comprises 510 residues: ATP synthase subunit alpha (510 aa).

169–176 (GDRQTGKT) is an ATP binding site.

This sequence belongs to the ATPase alpha/beta chains family. In terms of assembly, F-type ATPases have 2 components, CF(1) - the catalytic core - and CF(0) - the membrane proton channel. CF(1) has five subunits: alpha(3), beta(3), gamma(1), delta(1), epsilon(1). CF(0) has three main subunits: a(1), b(2) and c(9-12). The alpha and beta chains form an alternating ring which encloses part of the gamma chain. CF(1) is attached to CF(0) by a central stalk formed by the gamma and epsilon chains, while a peripheral stalk is formed by the delta and b chains.

Its subcellular location is the cell inner membrane. The catalysed reaction is ATP + H2O + 4 H(+)(in) = ADP + phosphate + 5 H(+)(out). Its function is as follows. Produces ATP from ADP in the presence of a proton gradient across the membrane. The alpha chain is a regulatory subunit. The sequence is that of ATP synthase subunit alpha from Rickettsia felis (strain ATCC VR-1525 / URRWXCal2) (Rickettsia azadi).